Reading from the N-terminus, the 307-residue chain is Aspartate carbamoyltransferase catalytic subunit (307 aa).

Carbamoyl phosphate contacts are provided by Arg-54 and Thr-55. Lys-83 is a binding site for L-aspartate. Carbamoyl phosphate-binding residues include Arg-104, His-132, and Gln-135. Arg-165 and Arg-228 together coordinate L-aspartate. Residues Leu-267 and Pro-268 each coordinate carbamoyl phosphate.

It belongs to the aspartate/ornithine carbamoyltransferase superfamily. ATCase family. As to quaternary structure, heterododecamer (2C3:3R2) of six catalytic PyrB chains organized as two trimers (C3), and six regulatory PyrI chains organized as three dimers (R2).

The catalysed reaction is carbamoyl phosphate + L-aspartate = N-carbamoyl-L-aspartate + phosphate + H(+). It participates in pyrimidine metabolism; UMP biosynthesis via de novo pathway; (S)-dihydroorotate from bicarbonate: step 2/3. In terms of biological role, catalyzes the condensation of carbamoyl phosphate and aspartate to form carbamoyl aspartate and inorganic phosphate, the committed step in the de novo pyrimidine nucleotide biosynthesis pathway. This is Aspartate carbamoyltransferase catalytic subunit from Clostridium botulinum (strain ATCC 19397 / Type A).